We begin with the raw amino-acid sequence, 78 residues long: uncharacterized protein (78 aa).

Functionally, this protein may be involved in virus assembly. Essential for virus function. This is an uncharacterized protein from Sulfolobus spindle-shape virus 1 (SSV1).